The sequence spans 110 residues: Small ribosomal subunit protein bS18 (110 aa).

Over residues 1–18 (MSEATTTTTTTSAPRPGG) the composition is skewed to low complexity. The interval 1–41 (MSEATTTTTTTSAPRPGGRPSGPRPDRGPGGPRKKRPFQRR) is disordered. Residues 32–41 (PRKKRPFQRR) are compositionally biased toward basic residues.

It belongs to the bacterial ribosomal protein bS18 family. In terms of assembly, part of the 30S ribosomal subunit. Forms a tight heterodimer with protein bS6.

Functionally, binds as a heterodimer with protein bS6 to the central domain of the 16S rRNA, where it helps stabilize the platform of the 30S subunit. This chain is Small ribosomal subunit protein bS18, found in Trichlorobacter lovleyi (strain ATCC BAA-1151 / DSM 17278 / SZ) (Geobacter lovleyi).